Here is a 433-residue protein sequence, read N- to C-terminus: tRNA-2-methylthio-N(6)-dimethylallyladenosine synthase (433 aa).

The 116-residue stretch at 3 to 118 folds into the MTTase N-terminal domain; that stretch reads KRLYIETLGC…IRDVIKQEKA (116 aa). [4Fe-4S] cluster is bound by residues C12, C49, C81, C150, C154, and C157. The region spanning 136-371 is the Radical SAM core domain; sequence RTSPYKAFIN…LHLQMLDSIS (236 aa). Positions 372 to 433 constitute a TRAM domain; it reads EQEKDKVYEV…RLSLEGELVG (62 aa).

This sequence belongs to the methylthiotransferase family. MiaB subfamily. As to quaternary structure, monomer. [4Fe-4S] cluster is required as a cofactor.

The protein localises to the cytoplasm. It carries out the reaction N(6)-dimethylallyladenosine(37) in tRNA + (sulfur carrier)-SH + AH2 + 2 S-adenosyl-L-methionine = 2-methylsulfanyl-N(6)-dimethylallyladenosine(37) in tRNA + (sulfur carrier)-H + 5'-deoxyadenosine + L-methionine + A + S-adenosyl-L-homocysteine + 2 H(+). In terms of biological role, catalyzes the methylthiolation of N6-(dimethylallyl)adenosine (i(6)A), leading to the formation of 2-methylthio-N6-(dimethylallyl)adenosine (ms(2)i(6)A) at position 37 in tRNAs that read codons beginning with uridine. The polypeptide is tRNA-2-methylthio-N(6)-dimethylallyladenosine synthase (Nitratiruptor sp. (strain SB155-2)).